We begin with the raw amino-acid sequence, 60 residues long: Large ribosomal subunit protein bL33 (60 aa).

This sequence belongs to the bacterial ribosomal protein bL33 family.

This chain is Large ribosomal subunit protein bL33, found in Chlorobium luteolum (strain DSM 273 / BCRC 81028 / 2530) (Pelodictyon luteolum).